Reading from the N-terminus, the 291-residue chain is DNA N6-methyl adenine demethylase (291 aa).

Positions 85-256 (GLTLIHNFLS…RGRRIALTMR (172 aa)) constitute a Fe2OG dioxygenase domain. A 2-oxoglutarate-binding site is contributed by 171–173 (LEY). His184, Asp186, and His239 together coordinate Fe cation.

This sequence belongs to the alkB family. In terms of assembly, interacts with top-2; the interaction is required for localization of top-2 to DNA. Also interacts with mtss-1, his-24, ule-3, C18B2.3, pgl-1, ceh-93, mcm-4 and F37C4.5. Fe(2+) serves as cofactor.

It localises to the nucleus. It carries out the reaction an N(6)-methyl-2'-deoxyadenosine in DNA + 2-oxoglutarate + O2 = a 2'-deoxyadenosine in DNA + formaldehyde + succinate + CO2. Its function is as follows. Dioxygenase that specifically demethylates DNA methylated on the 6th position of adenine (N(6)-methyladenosine) DNA. N(6)-methyladenosine (m6A) DNA is involved in epigenetic transgenerational inheritance. Plays an essential role in DNA replication and repair in the germline during meiosis. Binds to components of the DNA replication machinery such as top-2, and directs their localization to DNA to control DNA replication. The sequence is that of DNA N6-methyl adenine demethylase from Caenorhabditis elegans.